Here is an 86-residue protein sequence, read N- to C-terminus: Parvalbumin beta 3 (86 aa).

Ala1 is modified (N-acetylalanine). Positions 35-70 (LSPEEVKKFFAIIDQDHSGFIEEEELKLFLQTFSAG) constitute an EF-hand domain. Residues Asp48, Asp50, Ser52, Phe54, Glu56, and Glu59 each coordinate Ca(2+).

The protein belongs to the parvalbumin family.

Its function is as follows. In muscle, parvalbumin is thought to be involved in relaxation after contraction. It binds two calcium ions. The sequence is that of Parvalbumin beta 3 from Merluccius hubbsi (Argentine hake).